Consider the following 393-residue polypeptide: Proteasome-activating nucleotidase (393 aa).

The stretch at 14–53 forms a coiled coil; sequence SDEVQLVRLLEEKIKSLQIEIENLRKELNYYKAEMEKMLS. Residues 178–183 and tyrosine 317 contribute to the ATP site; that span reads GTGKTM. Residues 391–393 form a docks into pockets in the proteasome alpha-ring to cause gate opening region; that stretch reads KYS.

The protein belongs to the AAA ATPase family. As to quaternary structure, homohexamer. The hexameric complex has a two-ring architecture resembling a top hat that caps the 20S proteasome core at one or both ends. Upon ATP-binding, the C-terminus of PAN interacts with the alpha-rings of the proteasome core by binding to the intersubunit pockets.

The protein localises to the cytoplasm. Functionally, ATPase which is responsible for recognizing, binding, unfolding and translocation of substrate proteins into the archaeal 20S proteasome core particle. Is essential for opening the gate of the 20S proteasome via an interaction with its C-terminus, thereby allowing substrate entry and access to the site of proteolysis. Thus, the C-termini of the proteasomal ATPase function like a 'key in a lock' to induce gate opening and therefore regulate proteolysis. Unfolding activity requires energy from ATP hydrolysis, whereas ATP binding alone promotes ATPase-20S proteasome association which triggers gate opening, and supports translocation of unfolded substrates. The polypeptide is Proteasome-activating nucleotidase (Saccharolobus islandicus (strain Y.N.15.51 / Yellowstone #2) (Sulfolobus islandicus)).